Reading from the N-terminus, the 464-residue chain is Cytoplasmic tRNA 2-thiolation protein 2 (464 aa).

This sequence belongs to the CTU2/NCS2 family.

It localises to the cytoplasm. Its pathway is tRNA modification; 5-methoxycarbonylmethyl-2-thiouridine-tRNA biosynthesis. Functionally, plays a central role in 2-thiolation of mcm(5)S(2)U at tRNA wobble positions of tRNA(Lys), tRNA(Glu) and tRNA(Gln). May act by forming a heterodimer with NCS6/CTU1 that ligates sulfur from thiocarboxylated URM1 onto the uridine of tRNAs at wobble position. This Oryza sativa subsp. japonica (Rice) protein is Cytoplasmic tRNA 2-thiolation protein 2.